Consider the following 1166-residue polypeptide: ATP-dependent helicase/deoxyribonuclease subunit B (1166 aa).

Residues 1–290 (MGMRFILGRS…DTLEGNFQNR (290 aa)) enclose the UvrD-like helicase ATP-binding domain. An ATP-binding site is contributed by 8-15 (GRSGTNKS). Residues 283 to 588 (LEGNFQNRPY…QFSHVPPSMD (306 aa)) enclose the UvrD-like helicase C-terminal domain. [4Fe-4S] cluster-binding residues include cysteine 802, cysteine 1123, cysteine 1126, and cysteine 1132.

Belongs to the helicase family. AddB/RexB type 1 subfamily. As to quaternary structure, heterodimer of AddA and AddB. Mg(2+) serves as cofactor. It depends on [4Fe-4S] cluster as a cofactor.

Its function is as follows. The heterodimer acts as both an ATP-dependent DNA helicase and an ATP-dependent, dual-direction single-stranded exonuclease. Recognizes the chi site generating a DNA molecule suitable for the initiation of homologous recombination. The AddB subunit has 5' -&gt; 3' nuclease activity but not helicase activity. This chain is ATP-dependent helicase/deoxyribonuclease subunit B, found in Oceanobacillus iheyensis (strain DSM 14371 / CIP 107618 / JCM 11309 / KCTC 3954 / HTE831).